A 514-amino-acid polypeptide reads, in one-letter code: 2-isopropylmalate synthase (514 aa).

In terms of domain architecture, Pyruvate carboxyltransferase spans 5-268; it reads LIIFDTTLRD…DVGLDTTQIV (264 aa). Mn(2+) is bound by residues Asp14, His202, His204, and Asn239. Residues 395–514 form a regulatory domain region; that stretch reads KFVSLSQRSE…KDDKLNPQRS (120 aa).

This sequence belongs to the alpha-IPM synthase/homocitrate synthase family. LeuA type 1 subfamily. Homodimer. Mn(2+) serves as cofactor.

It is found in the cytoplasm. The enzyme catalyses 3-methyl-2-oxobutanoate + acetyl-CoA + H2O = (2S)-2-isopropylmalate + CoA + H(+). The protein operates within amino-acid biosynthesis; L-leucine biosynthesis; L-leucine from 3-methyl-2-oxobutanoate: step 1/4. Functionally, catalyzes the condensation of the acetyl group of acetyl-CoA with 3-methyl-2-oxobutanoate (2-ketoisovalerate) to form 3-carboxy-3-hydroxy-4-methylpentanoate (2-isopropylmalate). This is 2-isopropylmalate synthase from Burkholderia ambifaria (strain ATCC BAA-244 / DSM 16087 / CCUG 44356 / LMG 19182 / AMMD) (Burkholderia cepacia (strain AMMD)).